Consider the following 161-residue polypeptide: N5-carboxyaminoimidazole ribonucleotide mutase (161 aa).

3 residues coordinate substrate: Ser9, Asp12, and Arg39.

This sequence belongs to the AIR carboxylase family. Class I subfamily.

The enzyme catalyses 5-carboxyamino-1-(5-phospho-D-ribosyl)imidazole + H(+) = 5-amino-1-(5-phospho-D-ribosyl)imidazole-4-carboxylate. It participates in purine metabolism; IMP biosynthesis via de novo pathway; 5-amino-1-(5-phospho-D-ribosyl)imidazole-4-carboxylate from 5-amino-1-(5-phospho-D-ribosyl)imidazole (N5-CAIR route): step 2/2. Catalyzes the conversion of N5-carboxyaminoimidazole ribonucleotide (N5-CAIR) to 4-carboxy-5-aminoimidazole ribonucleotide (CAIR). In Vibrio vulnificus (strain CMCP6), this protein is N5-carboxyaminoimidazole ribonucleotide mutase.